The chain runs to 420 residues: Dynein axonemal assembly factor 4 (420 aa).

The CS domain maps to 3–87 (VRVSEFSWQQ…KEPVLWDSLS (85 aa)). The mediates interaction with ESR1 and STUB1 stretch occupies residues 7–103 (EFSWQQTPAT…EMMQRIREKS (97 aa)). Over residues 164–192 (ECQKKADGQKRVQRKEKPLEGKQAEETKA) the composition is skewed to basic and acidic residues. Residues 164 to 212 (ECQKKADGQKRVQRKEKPLEGKQAEETKALKPRGLPRKAPPTRLPTRGR) are disordered. 3 TPR repeats span residues 288 to 321 (PDWL…NCKI), 322 to 355 (PLLY…LTPP), and 364 to 397 (MKAH…DPAN).

In terms of assembly, interacts with ZMYND10. Interacts with ESR1 and ESR2. Interacts with STUB1. Interacts with DNAAF2. Interacts with CCT3, CCT4, CCT5 and CCT8. Interacts with DNAAF6/PIH1D3.

The protein resides in the nucleus. Its subcellular location is the cytoplasm. The protein localises to the dynein axonemal particle. It localises to the cell projection. It is found in the neuron projection. Its function is as follows. Involved in neuronal migration during development of the cerebral neocortex. May regulate the stability and proteasomal degradation of the estrogen receptors that play an important role in neuronal differentiation, survival and plasticity. Axonemal dynein assembly factor required for ciliary motility. In Mus musculus (Mouse), this protein is Dynein axonemal assembly factor 4.